A 243-amino-acid polypeptide reads, in one-letter code: 7-cyano-7-deazaguanine synthase (243 aa).

18–28 (FSGGQDSATCL) contributes to the ATP binding site. Zn(2+) contacts are provided by cysteine 206, cysteine 221, cysteine 224, and cysteine 227.

Belongs to the QueC family. It depends on Zn(2+) as a cofactor.

It catalyses the reaction 7-carboxy-7-deazaguanine + NH4(+) + ATP = 7-cyano-7-deazaguanine + ADP + phosphate + H2O + H(+). The protein operates within purine metabolism; 7-cyano-7-deazaguanine biosynthesis. Catalyzes the ATP-dependent conversion of 7-carboxy-7-deazaguanine (CDG) to 7-cyano-7-deazaguanine (preQ(0)). The sequence is that of 7-cyano-7-deazaguanine synthase from Methylorubrum extorquens (strain CM4 / NCIMB 13688) (Methylobacterium extorquens).